Here is a 318-residue protein sequence, read N- to C-terminus: Small ribosomal subunit protein RACK1 (318 aa).

7 WD repeats span residues 11 to 44 (GHRG…LSWG), 65 to 95 (GHSA…RLWN), 107 to 137 (GHTK…RVWN), 150 to 182 (AHTD…KVWD), 194 to 224 (GHTN…RLWD), 235 to 264 (AAGA…RIFD), and 282 to 315 (KKIV…WGVS).

It belongs to the WD repeat G protein beta family. Ribosomal protein RACK1 subfamily.

The chain is Small ribosomal subunit protein RACK1 from Trypanosoma brucei brucei.